A 244-amino-acid chain; its full sequence is tRNA (guanine-N(1)-)-methyltransferase (244 aa).

Residues G112 and 131–136 each bind S-adenosyl-L-methionine; that span reads IGDFIV.

Belongs to the RNA methyltransferase TrmD family. Homodimer.

The protein localises to the cytoplasm. The enzyme catalyses guanosine(37) in tRNA + S-adenosyl-L-methionine = N(1)-methylguanosine(37) in tRNA + S-adenosyl-L-homocysteine + H(+). In terms of biological role, specifically methylates guanosine-37 in various tRNAs. This Clostridium kluyveri (strain NBRC 12016) protein is tRNA (guanine-N(1)-)-methyltransferase.